We begin with the raw amino-acid sequence, 232 residues long: GTP cyclohydrolase III (232 aa).

This sequence belongs to the archaeal-type GTP cyclohydrolase family.

It catalyses the reaction GTP + 3 H2O = 2-amino-5-formylamino-6-(5-phospho-D-ribosylamino)pyrimidin-4(3H)-one + 2 phosphate + 2 H(+). In terms of biological role, catalyzes the formation of 2-amino-5-formylamino-6-ribofuranosylamino-4(3H)-pyrimidinone ribonucleotide monophosphate and inorganic phosphate from GTP. Also has an independent pyrophosphate phosphohydrolase activity. The protein is GTP cyclohydrolase III of Saccharolobus islandicus (strain Y.G.57.14 / Yellowstone #1) (Sulfolobus islandicus).